Here is a 437-residue protein sequence, read N- to C-terminus: Coiled-coil domain-containing protein 78 (437 aa).

Coiled-coil stretches lie at residues 83 to 114 (HLRE…LHGN), 147 to 287 (EELK…QRQE), and 360 to 408 (QRLQ…YKQE).

Belongs to the CCDC78 family.

It is found in the cytoplasm. The protein resides in the cytoskeleton. It localises to the microtubule organizing center. Its subcellular location is the centrosome. The protein localises to the centriole. It is found in the perinuclear region. The protein resides in the cell membrane. It localises to the sarcolemma. Its subcellular location is the sarcoplasmic reticulum. In terms of biological role, component of the deuterosome, a structure that promotes de novo centriole amplification in multiciliated cells that can generate more than 100 centrioles. Deuterosome-mediated centriole amplification occurs in terminally differentiated multiciliated cells (G1/0) and not in S phase. Essential for centriole amplification and is required for CEP152 localization to the deuterosome. The protein is Coiled-coil domain-containing protein 78 (Ccdc78) of Mus musculus (Mouse).